The following is a 411-amino-acid chain: Multidrug resistance protein MdtA (411 aa).

A signal peptide spans 1–26; that stretch reads MNNNKKTKKRFSLIIILLIVIAGAIA. Residues 35–55 are compositionally biased toward polar residues; the sequence is SAPPVSKDTPTANTPNRSTAG. The segment at 35–64 is disordered; sequence SAPPVSKDTPTANTPNRSTAGSRRPPMPPV.

It belongs to the membrane fusion protein (MFP) (TC 8.A.1) family. Part of a tripartite efflux system composed of MdtA, MdtB and MdtC.

It is found in the cell inner membrane. In Proteus mirabilis (strain HI4320), this protein is Multidrug resistance protein MdtA.